A 116-amino-acid polypeptide reads, in one-letter code: MKRQIAERSGRDGERRAALWLRAKGWSILAQRVKTPRGEIDLVAKRGKLVAFVEVKWRKTRAELDHAIDEYRLSRVAAAAEAIAHDYAQDGEDYRIDVILLAPGSFPRHIANAWQP.

The protein belongs to the UPF0102 family.

The chain is UPF0102 protein ELI_05985 from Erythrobacter litoralis (strain HTCC2594).